We begin with the raw amino-acid sequence, 275 residues long: Methylglyoxal reductase DkgA (275 aa).

Tyr51 acts as the Proton donor in catalysis. Substrate is bound at residue His107. 187–241 (SPLAQGGKGVFDQKVIRDLADKYGKTPAQIVIRWHLDSGLVVIPKSVTPSRIAEN) is a binding site for NADP(+).

It belongs to the aldo/keto reductase family. In terms of assembly, monomer.

The protein resides in the cytoplasm. The catalysed reaction is hydroxyacetone + NADP(+) = methylglyoxal + NADPH + H(+). In terms of biological role, aldo-keto reductase that significantly contributes to cellular methylglyoxal detoxification by catalyzing the NADPH-dependent conversion of methylglyoxal to acetol. This is Methylglyoxal reductase DkgA from Escherichia coli O157:H7.